A 344-amino-acid chain; its full sequence is GTP 3',8-cyclase (344 aa).

The 227-residue stretch at proline 19–alanine 245 folds into the Radical SAM core domain. Arginine 28 is a binding site for GTP. Residues cysteine 35 and cysteine 39 each contribute to the [4Fe-4S] cluster site. Tyrosine 41 contacts S-adenosyl-L-methionine. A [4Fe-4S] cluster-binding site is contributed by cysteine 42. GTP is bound at residue arginine 77. Glycine 81 is an S-adenosyl-L-methionine binding site. Threonine 111 lines the GTP pocket. Serine 135 is a binding site for S-adenosyl-L-methionine. Residue lysine 171 participates in GTP binding. Residue methionine 205 participates in S-adenosyl-L-methionine binding. [4Fe-4S] cluster contacts are provided by cysteine 268 and cysteine 271. GTP is bound at residue arginine 273–arginine 275. Cysteine 285 provides a ligand contact to [4Fe-4S] cluster.

The protein belongs to the radical SAM superfamily. MoaA family. In terms of assembly, monomer and homodimer. It depends on [4Fe-4S] cluster as a cofactor.

The enzyme catalyses GTP + AH2 + S-adenosyl-L-methionine = (8S)-3',8-cyclo-7,8-dihydroguanosine 5'-triphosphate + 5'-deoxyadenosine + L-methionine + A + H(+). It functions in the pathway cofactor biosynthesis; molybdopterin biosynthesis. Catalyzes the cyclization of GTP to (8S)-3',8-cyclo-7,8-dihydroguanosine 5'-triphosphate. This chain is GTP 3',8-cyclase, found in Brucella melitensis biotype 2 (strain ATCC 23457).